The primary structure comprises 553 residues: CTP synthase (553 aa).

Positions 1–270 (MTKYVFVTGG…DDLICRELEL (270 aa)) are amidoligase domain. Ser13 contacts CTP. A UTP-binding site is contributed by Ser13. ATP is bound by residues 14 to 19 (SLGKGI) and Asp71. Mg(2+) is bound by residues Asp71 and Glu144. CTP contacts are provided by residues 151 to 153 (DIE), 191 to 196 (KTKPTQ), and Lys227. Residues 191–196 (KTKPTQ) and Lys227 each bind UTP. A Glutamine amidotransferase type-1 domain is found at 295–547 (TIGMVGKYVE…IKAALIHQDA (253 aa)). Residue Gly356 coordinates L-glutamine. Cys383 serves as the catalytic Nucleophile; for glutamine hydrolysis. L-glutamine is bound by residues 384–387 (LGMQ), Glu407, and Arg473. Catalysis depends on residues His520 and Glu522.

It belongs to the CTP synthase family. Homotetramer.

The catalysed reaction is UTP + L-glutamine + ATP + H2O = CTP + L-glutamate + ADP + phosphate + 2 H(+). It carries out the reaction L-glutamine + H2O = L-glutamate + NH4(+). It catalyses the reaction UTP + NH4(+) + ATP = CTP + ADP + phosphate + 2 H(+). Its pathway is pyrimidine metabolism; CTP biosynthesis via de novo pathway; CTP from UDP: step 2/2. Allosterically activated by GTP, when glutamine is the substrate; GTP has no effect on the reaction when ammonia is the substrate. The allosteric effector GTP functions by stabilizing the protein conformation that binds the tetrahedral intermediate(s) formed during glutamine hydrolysis. Inhibited by the product CTP, via allosteric rather than competitive inhibition. In terms of biological role, catalyzes the ATP-dependent amination of UTP to CTP with either L-glutamine or ammonia as the source of nitrogen. Regulates intracellular CTP levels through interactions with the four ribonucleotide triphosphates. This is CTP synthase from Polynucleobacter asymbioticus (strain DSM 18221 / CIP 109841 / QLW-P1DMWA-1) (Polynucleobacter necessarius subsp. asymbioticus).